Here is a 256-residue protein sequence, read N- to C-terminus: Astacin-like metalloprotease toxin 2 (256 aa).

The first 24 residues, 1 to 24 (MIPDVGFLVLLTGALFICIKAAPA), serve as a signal peptide directing secretion. Positions 25-52 (TTDVDPTFEGRIVMEGDILIREEQLTER) are excised as a propeptide. The Peptidase M12A domain maps to 53–250 (NAIALENMRW…KKINTLYNCP (198 aa)). 2 disulfides stabilise this stretch: C94–C249 and C117–C136. H144 contacts Zn(2+). Residue E145 is part of the active site. Positions 148 and 154 each coordinate Zn(2+).

In terms of assembly, monomer. Requires Zn(2+) as cofactor. As to expression, expressed by the venom gland.

The protein resides in the secreted. Inhibited by 1,10-phenanthroline. Its function is as follows. Zinc metalloprotease. Provoques deadhesion of endothelial cells from cell cultures, and also degradation of fibronectin, fibrinogen and gelatin in vitro. Its role in the venom is not fully understood but it might act as a spreading factor that facilitates diffusion of other venom toxins. Alternatively, it might be involved in the proteolytic processing of other venom toxins or it might play a role in extra-oral digestion of prey. This Loxosceles intermedia (Brown spider) protein is Astacin-like metalloprotease toxin 2.